We begin with the raw amino-acid sequence, 296 residues long: tRNA dimethylallyltransferase (296 aa).

11 to 18 serves as a coordination point for ATP; sequence GPTAVGKT. Position 13-18 (13-18) interacts with substrate; sequence TAVGKT. An interaction with substrate tRNA region spans residues 36–39; the sequence is DSQQ.

The protein belongs to the IPP transferase family. As to quaternary structure, monomer. Mg(2+) serves as cofactor.

It carries out the reaction adenosine(37) in tRNA + dimethylallyl diphosphate = N(6)-dimethylallyladenosine(37) in tRNA + diphosphate. Functionally, catalyzes the transfer of a dimethylallyl group onto the adenine at position 37 in tRNAs that read codons beginning with uridine, leading to the formation of N6-(dimethylallyl)adenosine (i(6)A). This is tRNA dimethylallyltransferase from Streptococcus equi subsp. equi (strain 4047).